The sequence spans 526 residues: Outer capsid protein VP5 (526 aa).

The interval 1-42 (MGKIIKSLSRFGKKVGNALTSNTAKKIYNTIGKAAERFAESE) is involved in membrane permeabilization.

The protein belongs to the orbivirus VP5 family.

It localises to the virion. Functionally, VP5 protein is one of the two proteins (with VP2) which constitute the virus particle outer capsid. Acts as a membrane permeabilization protein that mediates release of viral particles from endosomal compartments into the cytoplasm. Permeabilization activity is probably negatively regulated by VP2 and is triggered by endosomal degradation of VP2 and exposure to low pH. This chain is Outer capsid protein VP5 (Segment-6), found in Bluetongue virus 13 (isolate USA) (BTV 13).